The sequence spans 99 residues: Integration host factor subunit alpha (99 aa).

This sequence belongs to the bacterial histone-like protein family. As to quaternary structure, heterodimer of an alpha and a beta chain.

Functionally, this protein is one of the two subunits of integration host factor, a specific DNA-binding protein that functions in genetic recombination as well as in transcriptional and translational control. The chain is Integration host factor subunit alpha from Stenotrophomonas maltophilia (strain R551-3).